The chain runs to 356 residues: Protein-glutamate methylesterase/protein-glutamine glutaminase 2 (356 aa).

Residues 6 to 123 (KVLIVDDSAL…KQFLEESSIR (118 aa)) enclose the Response regulatory domain. 4-aspartylphosphate is present on Asp-57. One can recognise a CheB-type methylesterase domain in the interval 165 to 356 (VQRTEKVVVV…AAAIVKACNS (192 aa)). Active-site residues include Ser-177, His-203, and Asp-299.

Belongs to the CheB family. Phosphorylated by CheA. Phosphorylation of the N-terminal regulatory domain activates the methylesterase activity.

It localises to the cytoplasm. It carries out the reaction [protein]-L-glutamate 5-O-methyl ester + H2O = L-glutamyl-[protein] + methanol + H(+). It catalyses the reaction L-glutaminyl-[protein] + H2O = L-glutamyl-[protein] + NH4(+). In terms of biological role, involved in chemotaxis. Part of a chemotaxis signal transduction system that modulates chemotaxis in response to various stimuli. Catalyzes the demethylation of specific methylglutamate residues introduced into the chemoreceptors (methyl-accepting chemotaxis proteins or MCP) by CheR. Also mediates the irreversible deamidation of specific glutamine residues to glutamic acid. The polypeptide is Protein-glutamate methylesterase/protein-glutamine glutaminase 2 (Oleidesulfovibrio alaskensis (strain ATCC BAA-1058 / DSM 17464 / G20) (Desulfovibrio alaskensis)).